Reading from the N-terminus, the 276-residue chain is Putative pyruvate, phosphate dikinase regulatory protein (276 aa).

151–158 (GISRTSKT) is a binding site for ADP.

Belongs to the pyruvate, phosphate/water dikinase regulatory protein family. PDRP subfamily.

The enzyme catalyses N(tele)-phospho-L-histidyl/L-threonyl-[pyruvate, phosphate dikinase] + ADP = N(tele)-phospho-L-histidyl/O-phospho-L-threonyl-[pyruvate, phosphate dikinase] + AMP + H(+). It carries out the reaction N(tele)-phospho-L-histidyl/O-phospho-L-threonyl-[pyruvate, phosphate dikinase] + phosphate + H(+) = N(tele)-phospho-L-histidyl/L-threonyl-[pyruvate, phosphate dikinase] + diphosphate. Functionally, bifunctional serine/threonine kinase and phosphorylase involved in the regulation of the pyruvate, phosphate dikinase (PPDK) by catalyzing its phosphorylation/dephosphorylation. The protein is Putative pyruvate, phosphate dikinase regulatory protein of Streptococcus agalactiae serotype Ia (strain ATCC 27591 / A909 / CDC SS700).